Consider the following 262-residue polypeptide: WW domain-binding protein 2 (262 aa).

The GRAM domain occupies 1–84 (MALNKNHSEG…YLMKDCEVKQ (84 aa)). The residue at position 192 (Y192) is a Phosphotyrosine. The PPxY motif 1 motif lies at 196–200 (PPPPY). Positions 197-206 (PPPYPGPMEP) are enriched in pro residues. The tract at residues 197–262 (PPPYPGPMEP…YYPPEDKKTQ (66 aa)) is disordered. Residues 219 to 231 (AAEAKAAEAAASA) are compositionally biased toward low complexity. Y232 carries the phosphotyrosine modification. Residues 246 to 255 (SQPPPPPYYP) show a composition bias toward pro residues. Positions 249 to 253 (PPPPY) match the PPxY motif 2 motif.

As to quaternary structure, binds to the WW domain of YAP1, WWP1 and WWP2. Interacts with NEDD4. Interacts with ESR1 and UBE3A. Post-translationally, phosphorylated in repsonse to EGF as well as estrogen and progesterone hormones. Tyr-192 and Tyr-232 are phosphorylated by YES and SRC inducing nuclear translocation.

The protein resides in the cytoplasm. The protein localises to the nucleus. Acts as a transcriptional coactivator of estrogen and progesterone receptors (ESR1 and PGR) upon hormone activation. In presence of estrogen, binds to ESR1-responsive promoters. Synergizes with YAP1 to enhance PGR activity. Modulates expression of post-synaptic scaffolding proteins via regulation of ESR1, ESR2 and PGR. This Rattus norvegicus (Rat) protein is WW domain-binding protein 2 (Wbp2).